Here is a 376-residue protein sequence, read N- to C-terminus: F-box/kelch-repeat protein At1g67480 (376 aa).

Residues 37–85 (DPLIPGLPDDVAKQCLALVPRARFPSMGSVCKKWRFVVQSKEFITVRRL) form the F-box domain. Kelch repeat units follow at residues 139–189 (KLLV…EVNG), 190–237 (HVYV…AFNG), 239–289 (LYVM…LFCI), and 291–335 (WKNH…LLFS).

The polypeptide is F-box/kelch-repeat protein At1g67480 (Arabidopsis thaliana (Mouse-ear cress)).